A 355-amino-acid chain; its full sequence is 6-aminohexanoate-oligomer endohydrolase (355 aa).

Threonine 267 functions as the Nucleophile in the catalytic mechanism.

This sequence belongs to the peptidase S58 family. As to quaternary structure, heterotetramer composed of 4 alpha/beta heterodimers. Expressed as an inactive precursor that is cleaved autocatalytically at Asn266/Thr267 to generate an active enzyme composed of an alpha subunit and a beta subunit.

It carries out the reaction [N-(6-aminohexanoyl)]n + H2O = [N-(6-aminohexanoyl)]n-x + [N-(6-aminohexanoyl)]x.. It functions in the pathway xenobiotic degradation; nylon-6 oligomer degradation. Involved in the degradation of nylon-6 oligomers. Degrades cyclic and linear oligomers of 6-aminohexanoate (Ahx) with a degree of polymerization greater than three by an endo-type mode. Cannot use Ahx cyclic dimer or the Ahx linear dimer. The polypeptide is 6-aminohexanoate-oligomer endohydrolase (Kocuria sp. (strain KY2)).